Consider the following 131-residue polypeptide: MATVPTRSGSPRQLTTKQTGDAWEAQARRWLEGKGLRFIAANVNERGGEIDLIMREGRTTIFVEVRYRRSALYGGAAASVTRSKQHKLLQTARLWLARHNGSFDTVDCRFDVVAFTGNEVEWIKDAFNDHS.

Residues 1–19 (MATVPTRSGSPRQLTTKQT) are compositionally biased toward polar residues. Residues 1 to 21 (MATVPTRSGSPRQLTTKQTGD) form a disordered region.

This sequence belongs to the UPF0102 family.

The protein is UPF0102 protein YraN of Escherichia coli (strain K12 / MC4100 / BW2952).